Here is a 330-residue protein sequence, read N- to C-terminus: tRNA U34 carboxymethyltransferase (330 aa).

Residues Lys-91, Trp-105, Lys-110, Gly-130, 152 to 154 (DPS), 181 to 182 (IE), Met-196, Tyr-200, and Arg-315 each bind carboxy-S-adenosyl-L-methionine.

The protein belongs to the class I-like SAM-binding methyltransferase superfamily. CmoB family. In terms of assembly, homotetramer.

It catalyses the reaction carboxy-S-adenosyl-L-methionine + 5-hydroxyuridine(34) in tRNA = 5-carboxymethoxyuridine(34) in tRNA + S-adenosyl-L-homocysteine + H(+). Functionally, catalyzes carboxymethyl transfer from carboxy-S-adenosyl-L-methionine (Cx-SAM) to 5-hydroxyuridine (ho5U) to form 5-carboxymethoxyuridine (cmo5U) at position 34 in tRNAs. The protein is tRNA U34 carboxymethyltransferase of Shewanella frigidimarina (strain NCIMB 400).